A 344-amino-acid chain; its full sequence is Phosphate acyltransferase (344 aa).

This sequence belongs to the PlsX family. In terms of assembly, homodimer. Probably interacts with PlsY.

The protein resides in the cytoplasm. It catalyses the reaction a fatty acyl-[ACP] + phosphate = an acyl phosphate + holo-[ACP]. Its pathway is lipid metabolism; phospholipid metabolism. In terms of biological role, catalyzes the reversible formation of acyl-phosphate (acyl-PO(4)) from acyl-[acyl-carrier-protein] (acyl-ACP). This enzyme utilizes acyl-ACP as fatty acyl donor, but not acyl-CoA. In Yersinia pestis bv. Antiqua (strain Antiqua), this protein is Phosphate acyltransferase.